A 245-amino-acid polypeptide reads, in one-letter code: Heavy metal-associated isoprenylated plant protein 1 (245 aa).

The 65-residue stretch at 28-92 (PVHVVLKIDF…KLQKKSKKKV (65 aa)) folds into the HMA 1 domain. Residues Cys39 and Cys42 each coordinate a metal cation. Positions 91–113 (KVELISPKPKKDTKENNEKKAND) are disordered. The span at 99–113 (PKKDTKENNEKKAND) shows a compositional bias: basic and acidic residues. An HMA 2 domain is found at 121–188 (VTTVVLKVNC…KLKKTVQVVP (68 aa)). Residues Cys132 and Cys135 each coordinate a metal cation. At Cys242 the chain carries Cysteine methyl ester. A lipid anchor (S-farnesyl cysteine) is attached at Cys242. The propeptide at 243 to 245 (SVM) is removed in mature form.

The protein belongs to the HIPP family.

Functionally, heavy-metal-binding protein. In Arabidopsis thaliana (Mouse-ear cress), this protein is Heavy metal-associated isoprenylated plant protein 1.